Consider the following 138-residue polypeptide: ATP synthase epsilon chain (138 aa).

The protein belongs to the ATPase epsilon chain family. As to quaternary structure, F-type ATPases have 2 components, CF(1) - the catalytic core - and CF(0) - the membrane proton channel. CF(1) has five subunits: alpha(3), beta(3), gamma(1), delta(1), epsilon(1). CF(0) has three main subunits: a, b and c.

Its subcellular location is the cell membrane. Functionally, produces ATP from ADP in the presence of a proton gradient across the membrane. This is ATP synthase epsilon chain from Streptococcus gordonii (strain Challis / ATCC 35105 / BCRC 15272 / CH1 / DL1 / V288).